We begin with the raw amino-acid sequence, 334 residues long: Aspartate carbamoyltransferase catalytic subunit (334 aa).

Carbamoyl phosphate-binding residues include arginine 71 and threonine 72. Residue lysine 99 coordinates L-aspartate. 3 residues coordinate carbamoyl phosphate: arginine 121, histidine 151, and glutamine 154. L-aspartate-binding residues include arginine 184 and arginine 239. Residues glycine 280 and proline 281 each coordinate carbamoyl phosphate.

The protein belongs to the aspartate/ornithine carbamoyltransferase superfamily. ATCase family. In terms of assembly, heterododecamer (2C3:3R2) of six catalytic PyrB chains organized as two trimers (C3), and six regulatory PyrI chains organized as three dimers (R2).

It carries out the reaction carbamoyl phosphate + L-aspartate = N-carbamoyl-L-aspartate + phosphate + H(+). It functions in the pathway pyrimidine metabolism; UMP biosynthesis via de novo pathway; (S)-dihydroorotate from bicarbonate: step 2/3. Its function is as follows. Catalyzes the condensation of carbamoyl phosphate and aspartate to form carbamoyl aspartate and inorganic phosphate, the committed step in the de novo pyrimidine nucleotide biosynthesis pathway. The sequence is that of Aspartate carbamoyltransferase catalytic subunit from Pseudomonas entomophila (strain L48).